The sequence spans 265 residues: UDP-N-acetylenolpyruvoylglucosamine reductase (265 aa).

In terms of domain architecture, FAD-binding PCMH-type spans G15–R169. The active site involves R149. Positions D182–G203 are disordered. The active-site Proton donor is C196.

This sequence belongs to the MurB family. FAD serves as cofactor.

Its subcellular location is the cytoplasm. It catalyses the reaction UDP-N-acetyl-alpha-D-muramate + NADP(+) = UDP-N-acetyl-3-O-(1-carboxyvinyl)-alpha-D-glucosamine + NADPH + H(+). It functions in the pathway cell wall biogenesis; peptidoglycan biosynthesis. Functionally, cell wall formation. The sequence is that of UDP-N-acetylenolpyruvoylglucosamine reductase from Thermus thermophilus (strain ATCC BAA-163 / DSM 7039 / HB27).